A 377-amino-acid polypeptide reads, in one-letter code: tRNA pseudouridine synthase B (377 aa).

Catalysis depends on D53, which acts as the Nucleophile.

This sequence belongs to the pseudouridine synthase TruB family. Type 1 subfamily.

It catalyses the reaction uridine(55) in tRNA = pseudouridine(55) in tRNA. Functionally, responsible for synthesis of pseudouridine from uracil-55 in the psi GC loop of transfer RNAs. This Tropheryma whipplei (strain Twist) (Whipple's bacillus) protein is tRNA pseudouridine synthase B.